Reading from the N-terminus, the 919-residue chain is Chitin synthase 1 (919 aa).

2 disordered regions span residues 1-69 (MSYD…SFQT) and 109-134 (NLAS…ALGP). Residues 11–30 (GQGRDYARQQRQQRSYQLSD) are compositionally biased toward low complexity. N-linked (GlcNAc...) asparagine glycans are attached at residues Asn187 and Asn556. The next 7 helical transmembrane spans lie at 594–614 (IVLL…SIII), 630–650 (LVVF…FLVL), 668–688 (IASF…SLWL), 713–733 (VLIA…ILYA), 742–762 (FPQY…YAFC), 843–863 (LVAF…NVNG), and 887–919 (IILW…FRKT).

It belongs to the chitin synthase family. Class III subfamily.

It is found in the cell membrane. Its subcellular location is the cytoplasmic vesicle membrane. It carries out the reaction [(1-&gt;4)-N-acetyl-beta-D-glucosaminyl](n) + UDP-N-acetyl-alpha-D-glucosamine = [(1-&gt;4)-N-acetyl-beta-D-glucosaminyl](n+1) + UDP + H(+). Its function is as follows. Polymerizes chitin, a structural polymer of the cell wall and septum, by transferring the sugar moiety of UDP-GlcNAc to the non-reducing end of the growing chitin polymer. This chain is Chitin synthase 1, found in Mycosarcoma maydis (Corn smut fungus).